The primary structure comprises 145 residues: Immunity protein CdiI (145 aa).

In terms of assembly, interacts with cognate toxin fragment CdiA-CT.

In terms of biological role, immunity protein component of a toxin-immunity protein module, which functions as a cellular contact-dependent growth inhibition (CDI) system. CDI modules allow bacteria to communicate with and inhibit the growth of closely related neighboring bacteria in a contact-dependent fashion. Protects cells against the 16S rRNase activity of CdiA-CT, its cognate toxin protein, but not against the toxic effects of a similar rRNase, non-cognate CdiA-CT from E.chrysanthemi strain EC16. The sequence is that of Immunity protein CdiI from Enterobacter cloacae subsp. cloacae (strain ATCC 13047 / DSM 30054 / NBRC 13535 / NCTC 10005 / WDCM 00083 / NCDC 279-56).